A 150-amino-acid chain; its full sequence is Large ribosomal subunit protein bL9 (150 aa).

It belongs to the bacterial ribosomal protein bL9 family.

Its function is as follows. Binds to the 23S rRNA. This chain is Large ribosomal subunit protein bL9, found in Cupriavidus metallidurans (strain ATCC 43123 / DSM 2839 / NBRC 102507 / CH34) (Ralstonia metallidurans).